The sequence spans 365 residues: UDP-N-acetylglucosamine--N-acetylmuramyl-(pentapeptide) pyrophosphoryl-undecaprenol N-acetylglucosamine transferase (365 aa).

UDP-N-acetyl-alpha-D-glucosamine is bound by residues Thr-12–Gly-14, Asn-128, Arg-169, Ser-195, and Gln-296.

Belongs to the glycosyltransferase 28 family. MurG subfamily.

Its subcellular location is the cell inner membrane. It catalyses the reaction di-trans,octa-cis-undecaprenyl diphospho-N-acetyl-alpha-D-muramoyl-L-alanyl-D-glutamyl-meso-2,6-diaminopimeloyl-D-alanyl-D-alanine + UDP-N-acetyl-alpha-D-glucosamine = di-trans,octa-cis-undecaprenyl diphospho-[N-acetyl-alpha-D-glucosaminyl-(1-&gt;4)]-N-acetyl-alpha-D-muramoyl-L-alanyl-D-glutamyl-meso-2,6-diaminopimeloyl-D-alanyl-D-alanine + UDP + H(+). The protein operates within cell wall biogenesis; peptidoglycan biosynthesis. Its function is as follows. Cell wall formation. Catalyzes the transfer of a GlcNAc subunit on undecaprenyl-pyrophosphoryl-MurNAc-pentapeptide (lipid intermediate I) to form undecaprenyl-pyrophosphoryl-MurNAc-(pentapeptide)GlcNAc (lipid intermediate II). This chain is UDP-N-acetylglucosamine--N-acetylmuramyl-(pentapeptide) pyrophosphoryl-undecaprenol N-acetylglucosamine transferase, found in Gluconobacter oxydans (strain 621H) (Gluconobacter suboxydans).